The sequence spans 419 residues: UDP-N-acetylglucosamine 1-carboxyvinyltransferase (419 aa).

22–23 (KN) contributes to the phosphoenolpyruvate binding site. Arg-93 is a UDP-N-acetyl-alpha-D-glucosamine binding site. Cys-117 serves as the catalytic Proton donor. Cys-117 is subject to 2-(S-cysteinyl)pyruvic acid O-phosphothioketal. Residues Asp-307 and Ile-329 each coordinate UDP-N-acetyl-alpha-D-glucosamine.

This sequence belongs to the EPSP synthase family. MurA subfamily.

It localises to the cytoplasm. The catalysed reaction is phosphoenolpyruvate + UDP-N-acetyl-alpha-D-glucosamine = UDP-N-acetyl-3-O-(1-carboxyvinyl)-alpha-D-glucosamine + phosphate. It functions in the pathway cell wall biogenesis; peptidoglycan biosynthesis. Its function is as follows. Cell wall formation. Adds enolpyruvyl to UDP-N-acetylglucosamine. In Shewanella denitrificans (strain OS217 / ATCC BAA-1090 / DSM 15013), this protein is UDP-N-acetylglucosamine 1-carboxyvinyltransferase.